The primary structure comprises 205 residues: Small ribosomal subunit protein uS4 (205 aa).

Positions 1 to 16 (MSKRETTKYKIDRRMG) are enriched in basic and acidic residues. The disordered stretch occupies residues 1–46 (MSKRETTKYKIDRRMGENIWGRPKSPVNRRDYGPGQHGQRRKGKLS). The S4 RNA-binding domain maps to 94 to 157 (SRLDAVIYRA…KQLVLVLESV (64 aa)).

This sequence belongs to the universal ribosomal protein uS4 family. In terms of assembly, part of the 30S ribosomal subunit. Contacts protein S5. The interaction surface between S4 and S5 is involved in control of translational fidelity.

Functionally, one of the primary rRNA binding proteins, it binds directly to 16S rRNA where it nucleates assembly of the body of the 30S subunit. Its function is as follows. With S5 and S12 plays an important role in translational accuracy. The polypeptide is Small ribosomal subunit protein uS4 (Bartonella henselae (strain ATCC 49882 / DSM 28221 / CCUG 30454 / Houston 1) (Rochalimaea henselae)).